The primary structure comprises 117 residues: Large ribosomal subunit protein uL18 (117 aa).

The protein belongs to the universal ribosomal protein uL18 family. Part of the 50S ribosomal subunit; part of the 5S rRNA/L5/L18/L25 subcomplex. Contacts the 5S and 23S rRNAs.

This is one of the proteins that bind and probably mediate the attachment of the 5S RNA into the large ribosomal subunit, where it forms part of the central protuberance. The sequence is that of Large ribosomal subunit protein uL18 from Mannheimia succiniciproducens (strain KCTC 0769BP / MBEL55E).